We begin with the raw amino-acid sequence, 476 residues long: Surface membrane glycoprotein GP46/M-2 (476 aa).

The signal sequence occupies residues Met-1–Ala-32. 4 consecutive repeat copies span residues Val-107 to Ser-130, Ser-131 to Ser-154, Glu-155 to Ser-178, and Ser-179 to Arg-202. Positions Val-107 to Arg-202 are 4 X 24 AA tandem repeats. 2 disordered regions span residues Ala-231–Gly-255 and Ala-348–Ala-370. A lipid anchor (GPI-anchor amidated cysteine) is attached at Cys-452. Residues Pro-453 to Gly-476 constitute a propeptide, removed in mature form.

Its subcellular location is the cell membrane. The polypeptide is Surface membrane glycoprotein GP46/M-2 (Leishmania amazonensis).